The primary structure comprises 152 residues: Deoxyuridine 5'-triphosphate nucleotidohydrolase (152 aa).

Substrate-binding positions include 72–74, asparagine 85, and 89–91; these read RSG and TVD.

Belongs to the dUTPase family. The cofactor is Mg(2+).

It carries out the reaction dUTP + H2O = dUMP + diphosphate + H(+). Its pathway is pyrimidine metabolism; dUMP biosynthesis; dUMP from dCTP (dUTP route): step 2/2. Its function is as follows. This enzyme is involved in nucleotide metabolism: it produces dUMP, the immediate precursor of thymidine nucleotides and it decreases the intracellular concentration of dUTP so that uracil cannot be incorporated into DNA. This Nitrobacter winogradskyi (strain ATCC 25391 / DSM 10237 / CIP 104748 / NCIMB 11846 / Nb-255) protein is Deoxyuridine 5'-triphosphate nucleotidohydrolase.